The chain runs to 59 residues: Dybowskin-1CDYa (59 aa).

Residues 1–22 (MFTLKKSLLLLFFLGTINFSLC) form the signal peptide. A propeptide spanning residues 23 to 44 (EEERNAEEERRDYPEERDVEVE) is cleaved from the precursor.

The protein belongs to the frog skin active peptide (FSAP) family. Brevinin subfamily. As to expression, expressed by the skin glands.

The protein resides in the secreted. Functionally, antimicrobial peptide. Has activity against the Gram-positive bacterium S.aureus (MIC=6 uM) and the Gram-negative bacterium E.coli (MIC=3 uM). Lacks hemolytic activity against human erythrocytes. The chain is Dybowskin-1CDYa from Rana dybowskii (Dybovsky's frog).